Reading from the N-terminus, the 377-residue chain is uncharacterized protein (377 aa).

Polar residues-rich tracts occupy residues 1–11 (MSSIQGTSGSS) and 31–43 (PSGQTISFSAVGK). Disordered stretches follow at residues 1-43 (MSSI…AVGK), 109-141 (SSEEQLESPGVRNKSALKGTNRSNSHREEIARN), and 328-377 (SSSP…RGFQ). Positions 334-345 (EDPRSLRDRLRD) are enriched in basic and acidic residues.

It belongs to the chlamydial CPn_0499/CT_392/TC_0671 family.

This is an uncharacterized protein from Chlamydia trachomatis serovar D (strain ATCC VR-885 / DSM 19411 / UW-3/Cx).